The primary structure comprises 525 residues: GMP synthase [glutamine-hydrolyzing] (525 aa).

One can recognise a Glutamine amidotransferase type-1 domain in the interval 12–206 (RILIIDFGSQ…THGICGCGGD (195 aa)). The active-site Nucleophile is the cysteine 90. Active-site residues include histidine 180 and glutamate 182. Positions 207 to 399 (WTMAAFKDQA…LGLPDEMVGR (193 aa)) constitute a GMPS ATP-PPase domain. An ATP-binding site is contributed by 234–240 (SGGVDSS).

In terms of assembly, homodimer.

The catalysed reaction is XMP + L-glutamine + ATP + H2O = GMP + L-glutamate + AMP + diphosphate + 2 H(+). Its pathway is purine metabolism; GMP biosynthesis; GMP from XMP (L-Gln route): step 1/1. Functionally, catalyzes the synthesis of GMP from XMP. This is GMP synthase [glutamine-hydrolyzing] from Rhodospirillum rubrum (strain ATCC 11170 / ATH 1.1.1 / DSM 467 / LMG 4362 / NCIMB 8255 / S1).